Reading from the N-terminus, the 118-residue chain is Small integral membrane protein 17 (118 aa).

The segment at 1–84 (MQSLRPEQTR…DDESEGSQGF (84 aa)) is disordered. A compositionally biased stretch (basic and acidic residues) spans 13–42 (LEPERTKTLLPRESRAWEKPPHPACTKDWE). Residues 96–116 (IVLVVCVLFLFLVLTGMPMMF) form a helical membrane-spanning segment.

The protein localises to the membrane. This chain is Small integral membrane protein 17 (SMIM17), found in Homo sapiens (Human).